The primary structure comprises 456 residues: Bifunctional protein GlmU (456 aa).

Residues 1–229 (MLNNAMSVVI…LSEVEGVNNR (229 aa)) form a pyrophosphorylase region. UDP-N-acetyl-alpha-D-glucosamine is bound by residues 11 to 14 (LAAG), Lys25, Gln76, 81 to 82 (GT), 103 to 105 (YGD), Gly140, Glu154, Asn169, and Asn227. Asp105 contributes to the Mg(2+) binding site. Position 227 (Asn227) interacts with Mg(2+). The interval 230-250 (LQLSRLERVYQFEQAEKLLLA) is linker. An N-acetyltransferase region spans residues 251–456 (GVMLRDPARF…EGWRRPVKKK (206 aa)). 2 residues coordinate UDP-N-acetyl-alpha-D-glucosamine: Arg333 and Lys351. His363 acts as the Proton acceptor in catalysis. Positions 366 and 377 each coordinate UDP-N-acetyl-alpha-D-glucosamine. Acetyl-CoA is bound by residues Ala380, 386–387 (NY), Ser405, Ala423, and Arg440.

This sequence in the N-terminal section; belongs to the N-acetylglucosamine-1-phosphate uridyltransferase family. It in the C-terminal section; belongs to the transferase hexapeptide repeat family. In terms of assembly, homotrimer. Mg(2+) is required as a cofactor.

The protein resides in the cytoplasm. The catalysed reaction is alpha-D-glucosamine 1-phosphate + acetyl-CoA = N-acetyl-alpha-D-glucosamine 1-phosphate + CoA + H(+). It catalyses the reaction N-acetyl-alpha-D-glucosamine 1-phosphate + UTP + H(+) = UDP-N-acetyl-alpha-D-glucosamine + diphosphate. Its pathway is nucleotide-sugar biosynthesis; UDP-N-acetyl-alpha-D-glucosamine biosynthesis; N-acetyl-alpha-D-glucosamine 1-phosphate from alpha-D-glucosamine 6-phosphate (route II): step 2/2. It participates in nucleotide-sugar biosynthesis; UDP-N-acetyl-alpha-D-glucosamine biosynthesis; UDP-N-acetyl-alpha-D-glucosamine from N-acetyl-alpha-D-glucosamine 1-phosphate: step 1/1. It functions in the pathway bacterial outer membrane biogenesis; LPS lipid A biosynthesis. Functionally, catalyzes the last two sequential reactions in the de novo biosynthetic pathway for UDP-N-acetylglucosamine (UDP-GlcNAc). The C-terminal domain catalyzes the transfer of acetyl group from acetyl coenzyme A to glucosamine-1-phosphate (GlcN-1-P) to produce N-acetylglucosamine-1-phosphate (GlcNAc-1-P), which is converted into UDP-GlcNAc by the transfer of uridine 5-monophosphate (from uridine 5-triphosphate), a reaction catalyzed by the N-terminal domain. This is Bifunctional protein GlmU from Escherichia coli O7:K1 (strain IAI39 / ExPEC).